Consider the following 149-residue polypeptide: Transcriptional repressor NrdR (149 aa).

A zinc finger lies at Cys3–Cys34. The region spanning Pro49–Glu139 is the ATP-cone domain.

Belongs to the NrdR family. It depends on Zn(2+) as a cofactor.

Its function is as follows. Negatively regulates transcription of bacterial ribonucleotide reductase nrd genes and operons by binding to NrdR-boxes. The sequence is that of Transcriptional repressor NrdR from Yersinia pseudotuberculosis serotype O:1b (strain IP 31758).